The primary structure comprises 506 residues: Gamma-aminobutyric acid receptor subunit epsilon (506 aa).

An N-terminal signal peptide occupies residues 1 to 17 (MLPKVLLMLLNMFLALQ). Residues 18–277 (WRVGPHIKLE…MTFFFNVSRR (260 aa)) are Extracellular-facing. The segment at 32–65 (AQDKVVFGPQPQPSGKKLPARETELTADHTTERP) is disordered. Basic and acidic residues predominate over residues 50–65 (PARETELTADHTTERP). The N-linked (GlcNAc...) asparagine glycan is linked to Asn135. An intrachain disulfide couples Cys196 to Cys210. The N-linked (GlcNAc...) asparagine glycan is linked to Asn253. The chain crosses the membrane as a helical span at residues 278–298 (FGFIVFQNYIPSSVTTMLSWV). Over 299 to 308 (SFWIKIEAAA) the chain is Cytoplasmic. A helical membrane pass occupies residues 309-328 (ARASVGVSSVLTMATLGTFS). The Extracellular segment spans residues 329 to 344 (RKNFPRVSYLTALDFY). The chain crosses the membrane as a helical span at residues 345-365 (IAICFVLCFCTLLEFTVLNFL). At 366–485 (TYNNIERQAS…HVYRLDNYSR (120 aa)) the chain is on the cytoplasmic side. Residues 486–506 (VLFPITFFFFNVVYWVICLNL) form a helical membrane-spanning segment.

The protein belongs to the ligand-gated ion channel (TC 1.A.9) family. Gamma-aminobutyric acid receptor (TC 1.A.9.5) subfamily. GABRE sub-subfamily. In terms of assembly, heteropentamer, formed by a combination of alpha (GABRA1-6), beta (GABRB1-3), gamma (GABRG1-3), delta (GABRD), epsilon (GABRE), rho (GABRR1-3), pi (GABRP) and theta (GABRQ) chains, each subunit exhibiting distinct physiological and pharmacological properties. As to expression, expressed in brain and heart. Strongly expressed in locus ceruleus from the first postnatal day. Weakly expressed in other brainstem nuclei and in the hypothalamus. Found in the cerebral cortex of pups.

It is found in the cell membrane. Its subcellular location is the postsynaptic cell membrane. The catalysed reaction is chloride(in) = chloride(out). Its function is as follows. Epsilon subunit of the heteropentameric ligand-gated chloride channel gated by gamma-aminobutyric acid (GABA), a major inhibitory neurotransmitter in the brain. GABA-gated chloride channels, also named GABA(A) receptors (GABAAR), consist of five subunits arranged around a central pore and contain GABA active binding site(s) located at the alpha and beta subunit interfaces. When activated by GABA, GABAARs selectively allow the flow of chloride anions across the cell membrane down their electrochemical gradient. GABARs containing epsilon subunit may also permit spontaneous chloride channel activity while preserving the structural information required for GABA-gated openings. GABARs containing epsilon subunit may regulate cardiac function. This chain is Gamma-aminobutyric acid receptor subunit epsilon, found in Rattus norvegicus (Rat).